Here is a 101-residue protein sequence, read N- to C-terminus: Chaperone modulatory protein CbpM (101 aa).

Belongs to the CbpM family.

In terms of biological role, interacts with CbpA and inhibits both the DnaJ-like co-chaperone activity and the DNA binding activity of CbpA. Together with CbpA, modulates the activity of the DnaK chaperone system. Does not inhibit the co-chaperone activity of DnaJ. In Pseudomonas putida (strain GB-1), this protein is Chaperone modulatory protein CbpM.